We begin with the raw amino-acid sequence, 202 residues long: Nucleoside triphosphate pyrophosphatase (202 aa).

Residue aspartate 79 is the Proton acceptor of the active site.

Belongs to the Maf family. A divalent metal cation is required as a cofactor.

It localises to the cytoplasm. It catalyses the reaction a ribonucleoside 5'-triphosphate + H2O = a ribonucleoside 5'-phosphate + diphosphate + H(+). The catalysed reaction is a 2'-deoxyribonucleoside 5'-triphosphate + H2O = a 2'-deoxyribonucleoside 5'-phosphate + diphosphate + H(+). Functionally, nucleoside triphosphate pyrophosphatase. May have a dual role in cell division arrest and in preventing the incorporation of modified nucleotides into cellular nucleic acids. The protein is Nucleoside triphosphate pyrophosphatase of Rhodopseudomonas palustris (strain ATCC BAA-98 / CGA009).